Reading from the N-terminus, the 212-residue chain is Methylthioribulose-1-phosphate dehydratase (212 aa).

Residues histidine 97 and histidine 99 each coordinate Zn(2+).

It belongs to the aldolase class II family. MtnB subfamily. As to quaternary structure, homotetramer. Requires Zn(2+) as cofactor.

The enzyme catalyses 5-(methylsulfanyl)-D-ribulose 1-phosphate = 5-methylsulfanyl-2,3-dioxopentyl phosphate + H2O. Its pathway is amino-acid biosynthesis; L-methionine biosynthesis via salvage pathway; L-methionine from S-methyl-5-thio-alpha-D-ribose 1-phosphate: step 2/6. Its function is as follows. Catalyzes the dehydration of methylthioribulose-1-phosphate (MTRu-1-P) into 2,3-diketo-5-methylthiopentyl-1-phosphate (DK-MTP-1-P). This Bacillus thuringiensis subsp. konkukian (strain 97-27) protein is Methylthioribulose-1-phosphate dehydratase.